The following is a 121-amino-acid chain: Ribosome-binding factor A (121 aa).

This sequence belongs to the RbfA family. Monomer. Binds 30S ribosomal subunits, but not 50S ribosomal subunits or 70S ribosomes.

It is found in the cytoplasm. Functionally, one of several proteins that assist in the late maturation steps of the functional core of the 30S ribosomal subunit. Associates with free 30S ribosomal subunits (but not with 30S subunits that are part of 70S ribosomes or polysomes). Required for efficient processing of 16S rRNA. May interact with the 5'-terminal helix region of 16S rRNA. This chain is Ribosome-binding factor A, found in Finegoldia magna (strain ATCC 29328 / DSM 20472 / WAL 2508) (Peptostreptococcus magnus).